We begin with the raw amino-acid sequence, 285 residues long: Energy-coupling factor transporter ATP-binding protein EcfA2 (285 aa).

The region spanning 3–245 is the ABC transporter domain; it reads IKIENLNHIY…VETLEKIGLA (243 aa). 40-47 contributes to the ATP binding site; the sequence is GHTGSGKS.

Belongs to the ABC transporter superfamily. Energy-coupling factor EcfA family. As to quaternary structure, forms a stable energy-coupling factor (ECF) transporter complex composed of 2 membrane-embedded substrate-binding proteins (S component), 2 ATP-binding proteins (A component) and 2 transmembrane proteins (T component).

It is found in the cell membrane. Its function is as follows. ATP-binding (A) component of a common energy-coupling factor (ECF) ABC-transporter complex. Unlike classic ABC transporters this ECF transporter provides the energy necessary to transport a number of different substrates. The protein is Energy-coupling factor transporter ATP-binding protein EcfA2 of Clostridium perfringens (strain 13 / Type A).